We begin with the raw amino-acid sequence, 137 residues long: Large ribosomal subunit protein uL16c (137 aa).

This sequence belongs to the universal ribosomal protein uL16 family. In terms of assembly, part of the 50S ribosomal subunit.

Its subcellular location is the plastid. The protein localises to the chloroplast. The protein is Large ribosomal subunit protein uL16c of Hordeum vulgare (Barley).